We begin with the raw amino-acid sequence, 262 residues long: Flap endonuclease Xni (262 aa).

Asp-109 is a binding site for Mg(2+). Positions 165-255 (LKPEQLADYW…FNLQDIRYEK (91 aa)) constitute a 5'-3' exonuclease domain. K(+) is bound by residues Leu-176, Ala-177, Ile-187, and Val-190. The interaction with DNA stretch occupies residues 189–194 (GVGPKA).

Belongs to the Xni family. It depends on Mg(2+) as a cofactor. K(+) is required as a cofactor.

Its function is as follows. Has flap endonuclease activity. During DNA replication, flap endonucleases cleave the 5'-overhanging flap structure that is generated by displacement synthesis when DNA polymerase encounters the 5'-end of a downstream Okazaki fragment. The protein is Flap endonuclease Xni of Aliivibrio fischeri (strain MJ11) (Vibrio fischeri).